Reading from the N-terminus, the 146-residue chain is Hydroxyproline-rich systemin (146 aa).

An N-terminal signal peptide occupies residues Met-1–Ala-24. Residues Arg-25–Gly-48 constitute a propeptide that is removed on maturation. The disordered stretch occupies residues Tyr-47 to Gln-128. A 4-hydroxyproline mark is found at Pro-51, Pro-55, Pro-56, Pro-57, Pro-58, and Pro-63. O-linked (Ara...) hydroxyproline glycans are attached at residues Pro-51, Pro-55, Pro-56, Pro-57, Pro-58, and Pro-63. Positions Glu-67–Asn-70 are excised as a propeptide. 4-hydroxyproline is present on residues Pro-79, Pro-80, and Pro-82. O-linked (Ara...) hydroxyproline glycosylation is found at Pro-79, Pro-80, and Pro-82. Positions Pro-86–Gly-110 are excised as a propeptide. 4-hydroxyproline occurs at positions 119, 120, 121, and 122. O-linked (Ara...) hydroxyproline glycosylation is found at Pro-119, Pro-120, Pro-121, and Pro-122. The propeptide occupies Ile-131–Tyr-146.

O-glycosylated; contains pentose side chains. Leaves.

It is found in the secreted. Its function is as follows. Activates a lipid-based signal transduction pathway in which linolenic acid is converted to jasmonic acid, a potent activator of defense gene transcription. Induces synthesis of proteinase inhibitors I and II in leaves when supplied through cut stems. In Solanum lycopersicum (Tomato), this protein is Hydroxyproline-rich systemin.